We begin with the raw amino-acid sequence, 918 residues long: Isoleucine--tRNA ligase (918 aa).

The short motif at 57-67 is the 'HIGH' region element; it reads PYANGHIHIGH. Glu-564 is a binding site for L-isoleucyl-5'-AMP. The short motif at 605–609 is the 'KMSKS' region element; that stretch reads KMSKS. Lys-608 is an ATP binding site. Cys-888, Cys-891, Cys-903, and Cys-906 together coordinate Zn(2+).

This sequence belongs to the class-I aminoacyl-tRNA synthetase family. IleS type 1 subfamily. As to quaternary structure, monomer. Zn(2+) serves as cofactor.

It localises to the cytoplasm. It catalyses the reaction tRNA(Ile) + L-isoleucine + ATP = L-isoleucyl-tRNA(Ile) + AMP + diphosphate. In terms of biological role, catalyzes the attachment of isoleucine to tRNA(Ile). As IleRS can inadvertently accommodate and process structurally similar amino acids such as valine, to avoid such errors it has two additional distinct tRNA(Ile)-dependent editing activities. One activity is designated as 'pretransfer' editing and involves the hydrolysis of activated Val-AMP. The other activity is designated 'posttransfer' editing and involves deacylation of mischarged Val-tRNA(Ile). The chain is Isoleucine--tRNA ligase from Nitratiruptor sp. (strain SB155-2).